The following is a 224-amino-acid chain: ATP phosphoribosyltransferase (224 aa).

This sequence belongs to the ATP phosphoribosyltransferase family. Short subfamily. Heteromultimer composed of HisG and HisZ subunits.

The protein localises to the cytoplasm. The enzyme catalyses 1-(5-phospho-beta-D-ribosyl)-ATP + diphosphate = 5-phospho-alpha-D-ribose 1-diphosphate + ATP. Its pathway is amino-acid biosynthesis; L-histidine biosynthesis; L-histidine from 5-phospho-alpha-D-ribose 1-diphosphate: step 1/9. In terms of biological role, catalyzes the condensation of ATP and 5-phosphoribose 1-diphosphate to form N'-(5'-phosphoribosyl)-ATP (PR-ATP). Has a crucial role in the pathway because the rate of histidine biosynthesis seems to be controlled primarily by regulation of HisG enzymatic activity. The polypeptide is ATP phosphoribosyltransferase (Cupriavidus necator (strain ATCC 17699 / DSM 428 / KCTC 22496 / NCIMB 10442 / H16 / Stanier 337) (Ralstonia eutropha)).